An 84-amino-acid chain; its full sequence is ATP synthase subunit c (84 aa).

2 consecutive transmembrane segments (helical) span residues 9 to 29 and 54 to 74; these read IIGA…GFAI and IVAG…LLFI.

Belongs to the ATPase C chain family. F-type ATPases have 2 components, F(1) - the catalytic core - and F(0) - the membrane proton channel. F(1) has five subunits: alpha(3), beta(3), gamma(1), delta(1), epsilon(1). F(0) has three main subunits: a(1), b(2) and c(10-14). The alpha and beta chains form an alternating ring which encloses part of the gamma chain. F(1) is attached to F(0) by a central stalk formed by the gamma and epsilon chains, while a peripheral stalk is formed by the delta and b chains.

Its subcellular location is the cell inner membrane. In terms of biological role, f(1)F(0) ATP synthase produces ATP from ADP in the presence of a proton or sodium gradient. F-type ATPases consist of two structural domains, F(1) containing the extramembraneous catalytic core and F(0) containing the membrane proton channel, linked together by a central stalk and a peripheral stalk. During catalysis, ATP synthesis in the catalytic domain of F(1) is coupled via a rotary mechanism of the central stalk subunits to proton translocation. Functionally, key component of the F(0) channel; it plays a direct role in translocation across the membrane. A homomeric c-ring of between 10-14 subunits forms the central stalk rotor element with the F(1) delta and epsilon subunits. This is ATP synthase subunit c from Haemophilus ducreyi (strain 35000HP / ATCC 700724).